Reading from the N-terminus, the 174-residue chain is Large ribosomal subunit protein bL12cy (174 aa).

The transit peptide at 1–45 (MASTTFSSAFSILSLPSSSPSPPPWAPRTLPVANRRRRAAAVAST) directs the protein to the chloroplast.

This sequence belongs to the bacterial ribosomal protein bL12 family.

It localises to the plastid. The protein localises to the chloroplast. In Secale cereale (Rye), this protein is Large ribosomal subunit protein bL12cy (RPL12-2).